We begin with the raw amino-acid sequence, 484 residues long: Arginyl-tRNA--protein transferase 1 (484 aa).

The protein belongs to the R-transferase family.

The enzyme catalyses an N-terminal L-alpha-aminoacyl-[protein] + L-arginyl-tRNA(Arg) = an N-terminal L-arginyl-L-aminoacyl-[protein] + tRNA(Arg) + H(+). Functionally, involved in the post-translational conjugation of arginine to the N-terminal aspartate or glutamate of a protein. This arginylation is required for degradation of the protein via the ubiquitin pathway. Does not arginylate cysteine residues. The sequence is that of Arginyl-tRNA--protein transferase 1 (Ate1) from Drosophila melanogaster (Fruit fly).